The primary structure comprises 292 residues: Sulfofructosephosphate aldolase (292 aa).

Lys-193 functions as the Schiff-base intermediate with substrate in the catalytic mechanism.

Belongs to the aldolase LacD family. In terms of assembly, homotetramer.

The catalysed reaction is 6-deoxy-6-sulfo-D-fructose 1-phosphate = (2S)-3-sulfolactaldehyde + dihydroxyacetone phosphate. Cleaves 6-deoxy-6-sulfo-D-fructose 1-phosphate (SFP) to form dihydroxyacetone phosphate (DHAP) and 3-sulfolactaldehyde (SLA). In Escherichia coli O157:H7, this protein is Sulfofructosephosphate aldolase (yihT).